The chain runs to 115 residues: Salivary protein gSG6 (115 aa).

The first 28 residues, 1–28, serve as a signal peptide directing secretion; it reads MAIRVELLLAMVLLPLLLLESVVPHAAA.

In terms of tissue distribution, female saliva (at protein level). Distal-lateral lobes of female salivary gland (at protein level). Not detected in male salivary gland (at protein level).

Its subcellular location is the secreted. In terms of biological role, required for efficient probing and blood feeding. This chain is Salivary protein gSG6, found in Anopheles gambiae (African malaria mosquito).